The sequence spans 312 residues: tRNA uridine(34) hydroxylase (312 aa).

Positions 130-225 (RGDEVVFFDG…YGEQFGNKGL (96 aa)) constitute a Rhodanese domain. Cys-185 (cysteine persulfide intermediate) is an active-site residue.

It belongs to the TrhO family.

The enzyme catalyses uridine(34) in tRNA + AH2 + O2 = 5-hydroxyuridine(34) in tRNA + A + H2O. In terms of biological role, catalyzes oxygen-dependent 5-hydroxyuridine (ho5U) modification at position 34 in tRNAs. The protein is tRNA uridine(34) hydroxylase of Corynebacterium glutamicum (strain R).